The following is a 1159-amino-acid chain: MDSFQFFEWLLRDIERNLLYTSLVYTNPKIAIVRYEPSENAKLWRSKELNTDSPNELLLTLKKTLDECSTLDEKIETLLRIRYFTVYVGDKSDKRNIIRSWLSTTINRLNVEEYASIQEIELQAKQWRAENAKSLRPYHYNIPINEYLRDNEIEVLDTGDNRWKSDTLQGLLPNFYHRTHTLIGAILFAVTSRLEIYSYEQKKALRYLLRTIEKCYNEGYLEMSRDRKWSHTLPELRTLTFRLYNSKVIHAACAMISLVHANPIDYEFLCQVVAVYQIIPANAAKLLSTPMTLYVGVATFSSNQVASTGNASECAPLQIENNIYVSEAQKKEWAESFKSDPLNKSRMLKLMNENLNTTLDKFSLIFNCFSSTFHVGHRIDNAQDAITDQVTATYTSNVNREMYDSYYYKLKQMLKEEIVQYVEDHVAKQYKDVTAESLSALANSSNGFSKEVKFIDRNIKTTKKILHLDNDLITNDYSDLSKALSHGIPMGTRNVPARQTRGIFILPWQVAAVQHTIAESLYKRAKKGAYQGSFAEAYTAKTASLTYGVLAEDTSKATKIILYTDVSQWDASQHNTEPYRSAWINAIREARAELKWRYDDEPKVLEMNVLDSMIKIQEYLLNSNLVVASPGSQRPTKIIRYHGVASGEKTTKIGNSFANVALIETVLDFAKTDIPDLEISHLRVDGDDNVVSINTSCTIDRLQRIIKEKYSSLNARVKALASYTGLEMAKRFIICGKIFERGAIPIFTAERPYGTDVSIQSMCGSSIYSSAVNAYRGFGDAYFSFMQDVLVPPSASTRITGRLRVLMSPVTLYATGPLSFEITPQGLGGRCRFFTQSAKLFTLFKMLTQTAAVSITPDEIKKYAETVQFKKRTEVMIASMQRKLLVPAKALARIIVDKEQQKTLGVPNVQSQKNRSQVSKAIEILGVPERNDIVAKGYYPEELYSLIISHSVVVYTSHSTPISIYRVNCEPVELLRSQLGIRIADSKPIAKPTNHLYDIVSGLSPIKISPSDLLTQAKKYDLSTYKGKRDYLSDLGLVGNTLKTYLASKMLFRDLLMSKYDDLYSTPGFGATQLTTIPLDVTSAEKVFSIRLGLPPHLYEVVMLLLLYEYIHYVFSCKRTFTAQMHAISQEQSAVITKNIILMLDNIQLDQVSFSDDAW.

The RdRp catalytic domain maps to 545-727; it reads LTYGVLAEDT…KALASYTGLE (183 aa).

The protein belongs to the reoviridae RNA-directed RNA polymerase family. In terms of assembly, interacts with VP3 (Potential). Interacts with VP2 (Potential). Interacts with NSP5; this interaction is probably necessary for the formation of functional virus factories.

It localises to the virion. It catalyses the reaction RNA(n) + a ribonucleoside 5'-triphosphate = RNA(n+1) + diphosphate. Its function is as follows. RNA-directed RNA polymerase that is involved in both transcription and genome replication. Together with VP3 capping enzyme, forms an enzyme complex positioned near the channels situated at each of the five-fold vertices of the core. Following infection, the outermost layer of the virus is lost, leaving a double-layered particle (DLP) made up of the core and VP6 shell. VP1 then catalyzes the transcription of fully conservative plus-strand genomic RNAs that are extruded through the DLP's channels into the cytoplasm where they function as mRNAs for translation of viral proteins. One copy of each of the viral (+)RNAs is also recruited during core assembly, together with newly synthesized polymerase complexes and VP2. The polymerase of these novo-formed particles catalyzes the synthesis of complementary minus-strands leading to dsDNA formation. To do so, the polymerase specifically recognizes conserved 3' sequence(s) in plus-strand RNA templates. Once dsRNA synthesis is complete, the polymerase switches to the transcriptional mode, thus providing secondary transcription. In Homo sapiens (Human), this protein is RNA-directed RNA polymerase.